The primary structure comprises 266 residues: Thiazole synthase (266 aa).

Lys95 acts as the Schiff-base intermediate with DXP in catalysis. Residues Gly156, 182-183 (AG), and 204-205 (NT) contribute to the 1-deoxy-D-xylulose 5-phosphate site.

The protein belongs to the ThiG family. In terms of assembly, homotetramer. Forms heterodimers with either ThiH or ThiS.

The protein resides in the cytoplasm. It carries out the reaction [ThiS sulfur-carrier protein]-C-terminal-Gly-aminoethanethioate + 2-iminoacetate + 1-deoxy-D-xylulose 5-phosphate = [ThiS sulfur-carrier protein]-C-terminal Gly-Gly + 2-[(2R,5Z)-2-carboxy-4-methylthiazol-5(2H)-ylidene]ethyl phosphate + 2 H2O + H(+). It participates in cofactor biosynthesis; thiamine diphosphate biosynthesis. In terms of biological role, catalyzes the rearrangement of 1-deoxy-D-xylulose 5-phosphate (DXP) to produce the thiazole phosphate moiety of thiamine. Sulfur is provided by the thiocarboxylate moiety of the carrier protein ThiS. In vitro, sulfur can be provided by H(2)S. This is Thiazole synthase from Shewanella denitrificans (strain OS217 / ATCC BAA-1090 / DSM 15013).